The primary structure comprises 472 residues: Probable glycine dehydrogenase (decarboxylating) subunit 2 (472 aa).

Lys268 carries the post-translational modification N6-(pyridoxal phosphate)lysine.

Belongs to the GcvP family. C-terminal subunit subfamily. The glycine cleavage system is composed of four proteins: P, T, L and H. In this organism, the P 'protein' is a heterodimer of two subunits. Pyridoxal 5'-phosphate serves as cofactor.

The catalysed reaction is N(6)-[(R)-lipoyl]-L-lysyl-[glycine-cleavage complex H protein] + glycine + H(+) = N(6)-[(R)-S(8)-aminomethyldihydrolipoyl]-L-lysyl-[glycine-cleavage complex H protein] + CO2. Functionally, the glycine cleavage system catalyzes the degradation of glycine. The P protein binds the alpha-amino group of glycine through its pyridoxal phosphate cofactor; CO(2) is released and the remaining methylamine moiety is then transferred to the lipoamide cofactor of the H protein. The polypeptide is Probable glycine dehydrogenase (decarboxylating) subunit 2 (Thermoplasma volcanium (strain ATCC 51530 / DSM 4299 / JCM 9571 / NBRC 15438 / GSS1)).